The following is a 248-amino-acid chain: Granzyme C (248 aa).

The signal sequence occupies residues 1–18 (MPPVLILLTLLLPLRAGA). A propeptide spanning residues 19 to 20 (EE) is cleaved from the precursor. Residues 21 to 246 (IIGGNEISPH…FVSWIKKTMK (226 aa)) enclose the Peptidase S1 domain. The cysteines at positions 50 and 66 are disulfide-linked. Residues His65 and Asp109 each act as charge relay system in the active site. Disulfide bonds link Cys143–Cys210 and Cys174–Cys189. Ser204 functions as the Charge relay system in the catalytic mechanism.

The protein belongs to the peptidase S1 family. Granzyme subfamily.

It localises to the cytolytic granule. In terms of biological role, this enzyme is probably necessary for target cell lysis in cell-mediated immune responses. The protein is Granzyme C (Gzmc) of Mus musculus (Mouse).